Reading from the N-terminus, the 369-residue chain is 2-aminoethylphosphonate--pyruvate transaminase (369 aa).

K193 bears the N6-(pyridoxal phosphate)lysine mark.

This sequence belongs to the class-V pyridoxal-phosphate-dependent aminotransferase family. PhnW subfamily. As to quaternary structure, homodimer. Pyridoxal 5'-phosphate is required as a cofactor.

The enzyme catalyses (2-aminoethyl)phosphonate + pyruvate = phosphonoacetaldehyde + L-alanine. Its function is as follows. Involved in phosphonate degradation. The polypeptide is 2-aminoethylphosphonate--pyruvate transaminase (Pseudomonas fluorescens (strain ATCC BAA-477 / NRRL B-23932 / Pf-5)).